Here is a 531-residue protein sequence, read N- to C-terminus: T-complex protein 1 subunit zeta-2 (531 aa).

It belongs to the TCP-1 chaperonin family. As to quaternary structure, component of the chaperonin-containing T-complex (TRiC), a heterooligomeric complex of about 850 to 900 kDa that forms two stacked rings, 12 to 16 nm in diameter. In terms of tissue distribution, testis specific.

The protein resides in the cytoplasm. Functionally, component of the chaperonin-containing T-complex (TRiC), a molecular chaperone complex that assists the folding of proteins upon ATP hydrolysis. This Mus musculus (Mouse) protein is T-complex protein 1 subunit zeta-2 (Cct6b).